The following is a 377-amino-acid chain: Guanine nucleotide-binding protein subunit beta (377 aa).

WD repeat units lie at residues 63 to 93 (GHTG…IVWN), 105 to 135 (LPCA…SIFN), 154 to 185 (GHKG…VLWD), 202 to 233 (GHTA…RLWD), 246 to 276 (GHES…RLFD), 293 to 323 (GDIP…YVWD), and 339 to 369 (SHEG…KIWA).

The protein belongs to the WD repeat G protein beta family. In terms of assembly, g proteins are composed of 3 units, alpha, beta and gamma.

In terms of biological role, guanine nucleotide-binding proteins (G proteins) are involved as a modulator or transducer in various transmembrane signaling systems. The beta and gamma chains are required for the GTPase activity, for replacement of GDP by GTP, and for G protein-effector interaction. This is Guanine nucleotide-binding protein subunit beta (GB1) from Solanum tuberosum (Potato).